A 580-amino-acid polypeptide reads, in one-letter code: MSEIRKPLLGFVHKLQDANASGSSGKTHCPTCLRLFKVPRLLPCLHTVCTTCLEKLDPFSVVDIRGGDSDTSSEGSVFQDPELCSLQPQIGILCPVCDAQVDLPLGGVKALTVDHLAMNDVLLENLRGEGQGLVCDLCSDREVEKRCQTCKANLCHFCCQAHRRQKKTTYHTMVDLKDLKGYSQVGKPILCPSHPAEELRLFCELCDRPVCRDCVVGEHREHPYDFTSNVIHKHGDSVRELLRDTQPHVEALEDALAQIKSVNNALQERVEAVAADVRTFSEGYIKAIEEHRDKLLQQLDDIRIQRETALQLQKAQLEQLLADMRTGVEFTEHLLTSGSDLEILITKGVVVERLRKLNKVEYSARPGVNHKICFSPQEKAGQCQGYEVYGAINTQEVDPAQCVLQGEDLHRAREKQTASFTLFCKDASGQSMGRGGDNVHVEVVPKDKKDSPIRTVVQDNKDGSYRVSYTPKEPGIYTVWVCIREQHVQGSPFNVTVRRKHRPHPGVFHCCTFCSSGGQKAARCACGGTMPGGYLGCGHGHKGHPGRPHWSCCGKFIEKSECSFTSGQGAPRSLLRTVAL.

The RING-type zinc finger occupies 29–98; the sequence is CPTCLRLFKV…QIGILCPVCD (70 aa). 2 B box-type zinc fingers span residues 130 to 176 and 186 to 227; these read GQGL…MVDL and GKPI…YDFT. Cys-135, Cys-138, Cys-158, His-162, Cys-191, His-194, Cys-214, and His-219 together coordinate Zn(2+). Residues 249 to 329 adopt a coiled-coil conformation; the sequence is VEALEDALAQ…LLADMRTGVE (81 aa). One copy of the Filamin repeat lies at 394 to 497; that stretch reads TQEVDPAQCV…VQGSPFNVTV (104 aa).

The protein belongs to the TRIM/RBCC family.

It is found in the cytoplasm. The protein localises to the nucleus. The catalysed reaction is S-ubiquitinyl-[E2 ubiquitin-conjugating enzyme]-L-cysteine + [acceptor protein]-L-lysine = [E2 ubiquitin-conjugating enzyme]-L-cysteine + N(6)-ubiquitinyl-[acceptor protein]-L-lysine.. Its function is as follows. E3 ubiquitin-protein ligase that plays a role in the regulation of inflammatory response. Mechanistically, mediates the 'Lys-48'-linked polyubiquitination of TAB2, a regulatory protein of the kinase TAK1, leading to its degradation via the proteasomal pathway and inhibition of the TLR-mediated inflammatory immune response. May act as a transcriptional repressor in mitogen-activated protein kinase signaling pathway. The chain is E3 ubiquitin-protein ligase TRIM45 (Trim45) from Mus musculus (Mouse).